Consider the following 287-residue polypeptide: 4-diphosphocytidyl-2-C-methyl-D-erythritol kinase (287 aa).

Lysine 11 is a catalytic residue. ATP is bound at residue proline 93–serine 103. The active site involves aspartate 135.

The protein belongs to the GHMP kinase family. IspE subfamily.

The catalysed reaction is 4-CDP-2-C-methyl-D-erythritol + ATP = 4-CDP-2-C-methyl-D-erythritol 2-phosphate + ADP + H(+). It functions in the pathway isoprenoid biosynthesis; isopentenyl diphosphate biosynthesis via DXP pathway; isopentenyl diphosphate from 1-deoxy-D-xylulose 5-phosphate: step 3/6. Catalyzes the phosphorylation of the position 2 hydroxy group of 4-diphosphocytidyl-2C-methyl-D-erythritol. In Chlorobium luteolum (strain DSM 273 / BCRC 81028 / 2530) (Pelodictyon luteolum), this protein is 4-diphosphocytidyl-2-C-methyl-D-erythritol kinase.